A 154-amino-acid polypeptide reads, in one-letter code: Superoxide dismutase [Cu-Zn] (154 aa).

3 residues coordinate Cu cation: histidine 47, histidine 49, and histidine 64. Cysteine 58 and cysteine 147 are disulfide-bonded. The Zn(2+) site is built by histidine 64, histidine 72, histidine 81, and aspartate 84. Histidine 121 contributes to the Cu cation binding site. Residue arginine 144 participates in substrate binding.

This sequence belongs to the Cu-Zn superoxide dismutase family. Homodimer. Requires Cu cation as cofactor. It depends on Zn(2+) as a cofactor.

The protein localises to the cytoplasm. The catalysed reaction is 2 superoxide + 2 H(+) = H2O2 + O2. Destroys radicals which are normally produced within the cells and which are toxic to biological systems. This chain is Superoxide dismutase [Cu-Zn] (sod1), found in Schizosaccharomyces pombe (strain 972 / ATCC 24843) (Fission yeast).